The following is a 151-amino-acid chain: 3-dehydroquinate dehydratase (151 aa).

The active-site Proton acceptor is the Tyr24. The substrate site is built by Asn76, His82, and Asp89. The Proton donor role is filled by His102. Residues 103-104 (VS) and Arg113 each bind substrate.

It belongs to the type-II 3-dehydroquinase family. As to quaternary structure, homododecamer.

The catalysed reaction is 3-dehydroquinate = 3-dehydroshikimate + H2O. Its pathway is metabolic intermediate biosynthesis; chorismate biosynthesis; chorismate from D-erythrose 4-phosphate and phosphoenolpyruvate: step 3/7. Its function is as follows. Catalyzes a trans-dehydration via an enolate intermediate. The chain is 3-dehydroquinate dehydratase from Rhodopseudomonas palustris (strain BisA53).